A 139-amino-acid chain; its full sequence is MRHKVGQRKLHRSTSHRLAMLNNMVTSLLEHQAIRTTLPKAKEARKIAERIITLGKRGGLANVRLAARTVKDRDVLQKVFGEYKDRYASRPGGYTRIVRLGFRRGDAAEMALLELVDRPEKAAPVDTEAAAPAEETKAE.

It belongs to the bacterial ribosomal protein bL17 family. As to quaternary structure, part of the 50S ribosomal subunit. Contacts protein L32.

This is Large ribosomal subunit protein bL17 from Myxococcus xanthus (strain DK1622).